We begin with the raw amino-acid sequence, 842 residues long: MSVKGKGFPLDLGGSFTEDAPRPPVPGEEGELITTDQRPFSHTYYSLKNDGIKNETSTATPRRPDLDLGYEPEGSASPTPPYLKWAESLHSLLDDQDGIHLFRTFLQQENCADLLDFWFACSGFRKLEPNDSKVEKRLKLAKAIYKKYVLDSNGIVSRQIKPATKSFIKDCVLRQQIDPAMFDQAQMEIQSMMEDNTYPVFLKSDIYLEYTTIGGESPKNYSDQSSGSGTGKGPSGYLPTLNEDEEWRCDQGGEHERERECIPSSLFSQKLALDSSSHCAGSNRRLSDGREFRPGTWREPVNPYYVNTGYAGAPVTSANDSEQQSMSSDADTMSLTDSSVDGIPPYRLRKHYRREMQESANANGRGPLPHIPRTYHMPKDIHVDPEKFAAELISRLEGVLRDREAEQKLEERLKRVRAEEEGDDGDVSSGPSVISHKLPSGPPMHHFNSRYSETGCVGMQIRDAHEENPESILDEHVQRVMKTPGCQSPGTGRHSPKSRSPDGHLSKTLPGSLGTMQTGHGKHSSKSTAKVDSGNLHHHKHVYHHVHHHGGVKPKEQIDGESTQRVQTNFPWNVESHNYATKSRNYAESMGMAPNPMDSLAYSGKVSMLSKRNAKKADLGKSESASHEMPVVPEDSERHQKILQWIMEGEKEIIRHKKSNHSSSSAKKQPPTELARPLSIERPGAVHPWVSAQLRNVVQPSHPFIQDPTMPPNPAPNPLTQLVSKPGARLEEEEKKAAKMPQKQRLKPQKKNVSAPSQPCDNIVVAYYFCGEPIPYRTMVKGRVVTLGQFKELLTKKGNYRYYFKKVSDEFDCGVVFEEVREDDMILPIYEEKIIGQVEKID.

The segment at 1-75 is disordered; sequence MSVKGKGFPL…LDLGYEPEGS (75 aa). Over residues 34-46 the composition is skewed to polar residues; it reads TTDQRPFSHTYYS. One can recognise an RGS domain in the interval 88–211; it reads SLHSLLDDQD…LKSDIYLEYT (124 aa). 9 disordered regions span residues 218–242, 277–297, 316–344, 414–451, 482–532, 543–562, 615–637, 656–675, and 729–754; these read PKNY…PTLN, SHCA…PGTW, TSAN…DGIP, KRVR…NSRY, KTPG…AKVD, YHHV…DGES, KKAD…EDSE, HKKS…TELA, and RLEE…KNVS. The segment covering 316–339 has biased composition (polar residues); sequence TSANDSEQQSMSSDADTMSLTDSS. The segment at 348 to 433 is interaction with GSK3B; it reads LRKHYRREMQ…DGDVSSGPSV (86 aa). The interval 434–508 is interaction with beta-catenin; it reads ISHKLPSGPP…RSPDGHLSKT (75 aa). Residues 543-552 are compositionally biased toward basic residues; it reads YHHVHHHGGV. A compositionally biased stretch (basic and acidic residues) spans 615 to 626; sequence KKADLGKSESAS. Positions 760–842 constitute a DIX domain; it reads CDNIVVAYYF…KIIGQVEKID (83 aa).

As to quaternary structure, homodimer. Interacts with hwa; leading to promote the tankyrase-mediated degradation of axin1. In terms of processing, ADP-ribosylated by tankyrase tnks and tnks2. Poly-ADP-ribosylated protein is recognized by rnf146, followed by ubiquitination at 'Lys-48' and subsequent activation of the Wnt signaling pathway. Ubiquitinated by rnf146 when poly-ADP-ribosylated, leading to its degradation and subsequent activation of the Wnt signaling pathway.

Its subcellular location is the cytoplasm. It localises to the nucleus. The protein resides in the membrane. The protein localises to the cell membrane. Component of the beta-catenin destruction complex required for regulating ctnnb1 levels through phosphorylation and ubiquitination, and modulating Wnt-signaling. Controls dorsoventral patterning via two opposing effects; down-regulates ctnnb1 to inhibit the Wnt signaling pathway and ventralize embryos, but also dorsalizes embryos by activating a Wnt-independent JNK signaling pathway. This is Axin-1 (axin1) from Xenopus laevis (African clawed frog).